Here is a 145-residue protein sequence, read N- to C-terminus: D-aminoacyl-tRNA deacylase (145 aa).

Positions 137–138 match the Gly-cisPro motif, important for rejection of L-amino acids motif; that stretch reads GP.

The protein belongs to the DTD family. Homodimer.

It is found in the cytoplasm. The catalysed reaction is glycyl-tRNA(Ala) + H2O = tRNA(Ala) + glycine + H(+). It carries out the reaction a D-aminoacyl-tRNA + H2O = a tRNA + a D-alpha-amino acid + H(+). In terms of biological role, an aminoacyl-tRNA editing enzyme that deacylates mischarged D-aminoacyl-tRNAs. Also deacylates mischarged glycyl-tRNA(Ala), protecting cells against glycine mischarging by AlaRS. Acts via tRNA-based rather than protein-based catalysis; rejects L-amino acids rather than detecting D-amino acids in the active site. By recycling D-aminoacyl-tRNA to D-amino acids and free tRNA molecules, this enzyme counteracts the toxicity associated with the formation of D-aminoacyl-tRNA entities in vivo and helps enforce protein L-homochirality. This is D-aminoacyl-tRNA deacylase from Shewanella sp. (strain MR-4).